Reading from the N-terminus, the 596-residue chain is Elongation factor 4 (596 aa).

Positions 2–183 (KNIRNFSIIA…AIITRIPAPN (182 aa)) constitute a tr-type G domain. GTP-binding positions include 14–19 (DHGKST) and 130–133 (NKID).

It belongs to the TRAFAC class translation factor GTPase superfamily. Classic translation factor GTPase family. LepA subfamily.

The protein localises to the cell inner membrane. It catalyses the reaction GTP + H2O = GDP + phosphate + H(+). Functionally, required for accurate and efficient protein synthesis under certain stress conditions. May act as a fidelity factor of the translation reaction, by catalyzing a one-codon backward translocation of tRNAs on improperly translocated ribosomes. Back-translocation proceeds from a post-translocation (POST) complex to a pre-translocation (PRE) complex, thus giving elongation factor G a second chance to translocate the tRNAs correctly. Binds to ribosomes in a GTP-dependent manner. The sequence is that of Elongation factor 4 from Campylobacter concisus (strain 13826).